Here is a 1028-residue protein sequence, read N- to C-terminus: Sodium/potassium-transporting ATPase subunit alpha-4 (1028 aa).

A disordered region spans residues 1 to 36; that stretch reads MEPGKETAATSEQKPRPTLRASNTNRQPKVKRRKKD. Residues 1–92 lie on the Cytoplasmic side of the membrane; sequence MEPGKETAAT…NVLTPPPTTP (92 aa). The interval 87–89 is interaction with phosphoinositide-3 kinase; sequence PPP. The chain crosses the membrane as a helical span at residues 93–113; that stretch reads EWIKFCKQLFGGFSLLLWTGS. The Extracellular portion of the chain corresponds to 114 to 137; sequence LLCFLAYGIHVSYYQENANKDNLY. Residues 138 to 158 traverse the membrane as a helical segment; the sequence is LGIVLSAVVIITGCFSYYQEA. The Cytoplasmic portion of the chain corresponds to 159–294; the sequence is KSSKIMESFK…MGKTPIATEI (136 aa). Residues 295-314 form a helical membrane-spanning segment; the sequence is EHFIHIITAVAVFLGVTFFF. At 315-326 the chain is on the extracellular side; sequence LSLILGYTWLDA. Residues 327-344 form a helical membrane-spanning segment; it reads VIFLIGIIVANVPEGLLA. The Cytoplasmic portion of the chain corresponds to 345 to 777; it reads TVTVCLTLTA…EEGRLIFDNL (433 aa). Aspartate 382 acts as the 4-aspartylphosphate intermediate in catalysis. Mg(2+) is bound by residues aspartate 722 and aspartate 726. Residues 778-797 form a helical membrane-spanning segment; sequence KKSIAYTLTSNIPEITPFLL. At 798–807 the chain is on the extracellular side; it reads FIVLSIPLPL. The helical transmembrane segment at 808 to 828 threads the bilayer; sequence GTITILCIDLGTDMVPAISLA. Residues 829–848 are Cytoplasmic-facing; that stretch reads YETPESDIMKRLPRNPKTDN. The helical transmembrane segment at 849–871 threads the bilayer; that stretch reads LVNDRLIGMAYGQIGMIQALAGF. Topologically, residues 872 to 923 are extracellular; the sequence is FTYFVILAENGFKPLDLLGIRLYWDDTNLNDLEDTYGQQWTYEQRKVVEFTC. A helical membrane pass occupies residues 924–943; that stretch reads QTAFFISIVIVQWADLIICK. The Cytoplasmic segment spans residues 944 to 956; the sequence is TRRNSLFKQGMKN. Serine 948 bears the Phosphoserine; by PKA mark. The helical transmembrane segment at 957-975 threads the bilayer; sequence KVLIFGLLEETILAACLSY. Residues 976–990 are Extracellular-facing; sequence IPGMDVALRMYPLKI. A helical transmembrane segment spans residues 991-1011; the sequence is NWWFCALPYSVLIFIYDEVRK. Topologically, residues 1012–1028 are cytoplasmic; it reads LIIRRRPGGWLEKETYY.

This sequence belongs to the cation transport ATPase (P-type) (TC 3.A.3) family. Type IIC subfamily. The sodium/potassium-transporting ATPase is composed of a catalytic alpha subunit, an auxiliary non-catalytic beta subunit and an additional regulatory subunit.

Its subcellular location is the cell membrane. It catalyses the reaction K(+)(out) + Na(+)(in) + ATP + H2O = K(+)(in) + Na(+)(out) + ADP + phosphate + H(+). Specifically inhibited by an endogenous cardiac glycoside, ouabain. In terms of biological role, this is the catalytic component of the active enzyme, which catalyzes the hydrolysis of ATP coupled with the exchange of sodium and potassium ions across the plasma membrane. This action creates the electrochemical gradient of sodium and potassium ions, providing the energy for active transport of various nutrients. Plays a role in sperm motility. The polypeptide is Sodium/potassium-transporting ATPase subunit alpha-4 (Atp1a4) (Rattus norvegicus (Rat)).